The chain runs to 260 residues: Zinc import ATP-binding protein ZnuC (260 aa).

The ABC transporter domain maps to 18–234 (IRLQEVAVTF…PEYQKLFGSH (217 aa)). ATP is bound at residue 50–57 (GNNGAGKT). The tract at residues 241–260 (VFPHDHHDHSGPALAGGGRG) is disordered.

The protein belongs to the ABC transporter superfamily. Zinc importer (TC 3.A.1.15.5) family. The complex is composed of two ATP-binding proteins (ZnuC), two transmembrane proteins (ZnuB) and a solute-binding protein (ZnuA).

The protein localises to the cell inner membrane. It carries out the reaction Zn(2+)(out) + ATP(in) + H2O(in) = Zn(2+)(in) + ADP(in) + phosphate(in) + H(+)(in). In terms of biological role, part of the ABC transporter complex ZnuABC involved in zinc import. Responsible for energy coupling to the transport system. In Halorhodospira halophila (strain DSM 244 / SL1) (Ectothiorhodospira halophila (strain DSM 244 / SL1)), this protein is Zinc import ATP-binding protein ZnuC.